Consider the following 314-residue polypeptide: Ecto-ADP-ribosyltransferase 4 (314 aa).

An N-terminal signal peptide occupies residues 1–46 (MGPLINRCKKILLPTTVPPATMRIWLLGGPLPFLLLLSGLQRPTEG). Cystine bridges form between Cys-69–Cys-280 and Cys-182–Cys-231. Residues 91–276 (KNYFRMWQKA…LQLRSTGNLS (186 aa)) enclose the TR mART core domain. A glycan (N-linked (GlcNAc...) asparagine) is linked at Asn-114. Tyr-126 is an NAD(+) binding site. The N-linked (GlcNAc...) asparagine glycan is linked to Asn-178. Gln-206 is an NAD(+) binding site. Residue Asn-222 is glycosylated (N-linked (GlcNAc...) asparagine). Ser-240 contributes to the NAD(+) binding site. Residues Asn-257 and Asn-274 are each glycosylated (N-linked (GlcNAc...) asparagine). Ala-285 carries GPI-anchor amidated alanine lipidation. A propeptide spans 286–314 (SSKKCIPDPIAIASLSFLTSVIIFSKSRV) (removed in mature form).

The protein belongs to the Arg-specific ADP-ribosyltransferase family.

Its subcellular location is the cell membrane. The catalysed reaction is L-arginyl-[protein] + NAD(+) = N(omega)-(ADP-D-ribosyl)-L-arginyl-[protein] + nicotinamide + H(+). The chain is Ecto-ADP-ribosyltransferase 4 (ART4) from Pan troglodytes (Chimpanzee).